The sequence spans 505 residues: UDP-N-acetylmuramyl-tripeptide synthetase (505 aa).

Ser35 is a UDP-N-acetyl-alpha-D-muramoyl-L-alanyl-D-glutamate binding site. Gly118–Ser124 is a binding site for ATP. UDP-N-acetyl-alpha-D-muramoyl-L-alanyl-D-glutamate-binding positions include Ser163 to Thr164, Thr190, and Arg200. N6-carboxylysine is present on Lys232.

The protein belongs to the MurCDEF family. MurE subfamily. Carboxylation is probably crucial for Mg(2+) binding and, consequently, for the gamma-phosphate positioning of ATP.

The protein localises to the cytoplasm. Its pathway is cell wall biogenesis; peptidoglycan biosynthesis. Catalyzes the addition of an amino acid to the nucleotide precursor UDP-N-acetylmuramoyl-L-alanyl-D-glutamate (UMAG) in the biosynthesis of bacterial cell-wall peptidoglycan. In Borreliella afzelii (strain PKo) (Borrelia afzelii), this protein is UDP-N-acetylmuramyl-tripeptide synthetase.